The following is a 386-amino-acid chain: Bifunctional chorismate mutase/prephenate dehydratase (386 aa).

Residues 1 to 92 (MTSENPLLAL…DSVLTQQALL (92 aa)) form the Chorismate mutase domain. Arginine 11, arginine 28, lysine 39, aspartate 48, glutamate 52, serine 84, and glutamine 88 together coordinate substrate. Residues 105–285 (RIAFLGPKGS…NFTRFVVLAR (181 aa)) form the Prephenate dehydratase domain. Residues 299 to 376 (TLLMATGQQA…RSMKVLGCYP (78 aa)) enclose the ACT domain.

The protein resides in the cytoplasm. The catalysed reaction is chorismate = prephenate. It catalyses the reaction prephenate + H(+) = 3-phenylpyruvate + CO2 + H2O. It participates in amino-acid biosynthesis; L-phenylalanine biosynthesis; phenylpyruvate from prephenate: step 1/1. Its pathway is metabolic intermediate biosynthesis; prephenate biosynthesis; prephenate from chorismate: step 1/1. Catalyzes the Claisen rearrangement of chorismate to prephenate and the decarboxylation/dehydration of prephenate to phenylpyruvate. The sequence is that of Bifunctional chorismate mutase/prephenate dehydratase (pheA) from Escherichia coli O157:H7.